We begin with the raw amino-acid sequence, 435 residues long: Transcription factor gkaF (435 aa).

Residues 1–19 (MGRPQRGDTAKERRERQDK) are compositionally biased toward basic and acidic residues. Disordered stretches follow at residues 1–40 (MGRPQRGDTAKERRERQDKVTSPPESGPISQSGLSDTVDW), 115–158 (STTA…SSQS), and 231–257 (FSSESASPHVNRPPIQQQQSPSRFLAP). The segment covering 28–40 (PISQSGLSDTVDW) has biased composition (polar residues). The span at 143–158 (SQSSDSSKPSSTSSQS) shows a compositional bias: low complexity.

Its subcellular location is the nucleus. Functionally, transcription factor; part of the gene cluster that mediates the biosynthesis of GKK1032, fungal natural products containing a macrocyclic para-cyclophane connected to a decahydrofluorene ring system that show potent antitumor activities. This chain is Transcription factor gkaF, found in Penicillium citrinum.